The sequence spans 341 residues: GDT1-like protein 1, chloroplastic (341 aa).

Over residues 1-13 (MASVASSTVFASS) the composition is skewed to low complexity. 2 disordered regions span residues 1–41 (MASV…GRSV) and 54–76 (VVTR…GGGR). The N-terminal 57 residues, 1-57 (MASVASSTVFASSLPHHRATTRAPPTPPRIPRRARLPGRSVVSCLPKRGSEKLVVTR), are a transit peptide targeting the chloroplast. The next 7 helical transmembrane spans lie at 79–99 (PSLD…VLML), 117–137 (VVGD…LIFF), 158–178 (AIIF…SVVL), 203–223 (FLAA…AASG), 246–266 (GAGI…VFIA), 286–306 (LGVI…AVLG), and 318–338 (IVAY…LVEI).

Belongs to the GDT1 family.

The protein resides in the plastid. It is found in the chloroplast membrane. The protein is GDT1-like protein 1, chloroplastic of Oryza sativa subsp. indica (Rice).